We begin with the raw amino-acid sequence, 119 residues long: Large ribosomal subunit protein bL20 (119 aa).

It belongs to the bacterial ribosomal protein bL20 family.

Binds directly to 23S ribosomal RNA and is necessary for the in vitro assembly process of the 50S ribosomal subunit. It is not involved in the protein synthesizing functions of that subunit. This is Large ribosomal subunit protein bL20 from Acinetobacter baumannii (strain SDF).